The sequence spans 724 residues: Ribosomal RNA large subunit methyltransferase K/L (724 aa).

The THUMP domain maps to 42–153; sequence DAQRLVLWSR…KGRATLSVDL (112 aa).

Belongs to the methyltransferase superfamily. RlmKL family.

It localises to the cytoplasm. The enzyme catalyses guanosine(2445) in 23S rRNA + S-adenosyl-L-methionine = N(2)-methylguanosine(2445) in 23S rRNA + S-adenosyl-L-homocysteine + H(+). The catalysed reaction is guanosine(2069) in 23S rRNA + S-adenosyl-L-methionine = N(2)-methylguanosine(2069) in 23S rRNA + S-adenosyl-L-homocysteine + H(+). Functionally, specifically methylates the guanine in position 2445 (m2G2445) and the guanine in position 2069 (m7G2069) of 23S rRNA. This is Ribosomal RNA large subunit methyltransferase K/L from Xylella fastidiosa (strain 9a5c).